The primary structure comprises 55 residues: Large ribosomal subunit protein bL33 (55 aa).

This sequence belongs to the bacterial ribosomal protein bL33 family.

This is Large ribosomal subunit protein bL33 from Yersinia pestis (strain Pestoides F).